The chain runs to 304 residues: MLPKVLFLMGPTASGKTALALELAENHNCEIISVDSALIYRGMDIGSAKPSMEELARGPHRLIDIRDPSESYSAADFRADALAEIAQIIRMGKTPLLVGGTMMYFKALLEGLSPLPSADDAIRADIQAEADVKGWETLHDQLRDIDPVSAERIHPNDPQRLSRALEVYRISGKSLTELTQTKSAPLPYDVVQFAIAPRERKVLHDLIAQRFRIMLQQGFIDEVTQLKARGDLHLDLPSMRCVGYRQCWQHLDGEFDYDTMVEKAVAATRQLAKRQLTWLRSWPELNWLESGAEGNLVTLMRHCR.

10-17 (GPTASGKT) provides a ligand contact to ATP. 12–17 (TASGKT) is a binding site for substrate. Interaction with substrate tRNA stretches follow at residues 35-38 (DSAL), 159-163 (QRLSR), and 240-245 (RCVGYR).

This sequence belongs to the IPP transferase family. As to quaternary structure, monomer. Mg(2+) serves as cofactor.

The enzyme catalyses adenosine(37) in tRNA + dimethylallyl diphosphate = N(6)-dimethylallyladenosine(37) in tRNA + diphosphate. Catalyzes the transfer of a dimethylallyl group onto the adenine at position 37 in tRNAs that read codons beginning with uridine, leading to the formation of N6-(dimethylallyl)adenosine (i(6)A). The sequence is that of tRNA dimethylallyltransferase from Shewanella putrefaciens (strain CN-32 / ATCC BAA-453).